The chain runs to 232 residues: MGRVEDRVRLEASWKEALHDEFEKPYMQELSDFLRREKAAGKEIYPPGSLIFNALDSTPLDQVKVVIIGQDPYHGPGQAHGLCFSVQPGVPVPPSLQNIFKELKRDLNIDIPKHGHLQRWAEQGVLLLNTSLTVERGNAGSHAGMGWQRFTDRVIEVVSQRREHVVFMLWGSHAQSKRRLIDSSKHLVLCSAHPSPLSAHRGFIGNGHFSRANQFLEQHGLTPIDWHLPEEP.

Asp-71 functions as the Proton acceptor in the catalytic mechanism.

The protein belongs to the uracil-DNA glycosylase (UDG) superfamily. UNG family.

Its subcellular location is the cytoplasm. The catalysed reaction is Hydrolyzes single-stranded DNA or mismatched double-stranded DNA and polynucleotides, releasing free uracil.. Its function is as follows. Excises uracil residues from the DNA which can arise as a result of misincorporation of dUMP residues by DNA polymerase or due to deamination of cytosine. This is Uracil-DNA glycosylase from Azotobacter vinelandii (strain DJ / ATCC BAA-1303).